We begin with the raw amino-acid sequence, 101 residues long: Small ribosomal subunit protein uS10 (101 aa).

It belongs to the universal ribosomal protein uS10 family. Part of the 30S ribosomal subunit.

Functionally, involved in the binding of tRNA to the ribosomes. This Rhodococcus erythropolis (strain PR4 / NBRC 100887) protein is Small ribosomal subunit protein uS10.